A 397-amino-acid chain; its full sequence is Ribosomal RNA large subunit methyltransferase I (397 aa).

The 79-residue stretch at 2–80 (SAAIYLVKGR…QDVNRAFFVK (79 aa)) folds into the PUA domain.

The protein belongs to the methyltransferase superfamily. RlmI family.

It localises to the cytoplasm. The catalysed reaction is cytidine(1962) in 23S rRNA + S-adenosyl-L-methionine = 5-methylcytidine(1962) in 23S rRNA + S-adenosyl-L-homocysteine + H(+). In terms of biological role, specifically methylates the cytosine at position 1962 (m5C1962) of 23S rRNA. The chain is Ribosomal RNA large subunit methyltransferase I from Vibrio vulnificus (strain YJ016).